Reading from the N-terminus, the 534-residue chain is NAD(P)H-quinone oxidoreductase chain 4 2 (534 aa).

13 consecutive transmembrane segments (helical) span residues 6 to 26 (FPWL…IPLL), 38 to 58 (WYSL…FWTS), 93 to 113 (LILL…PVTF), 117 to 137 (FFYF…AVQD), 138 to 158 (LLVF…LLAI), 171 to 191 (FILY…AMAF), 210 to 230 (IGFQ…KLPI), 245 to 265 (TAPV…YALF), 279 to 299 (FAPI…LTSF), 313 to 333 (ISHM…GLSG), 335 to 355 (MLQM…VGAT), 377 to 399 (MFAM…GFVA), and 419 to 439 (VVVI…LLSM).

This sequence belongs to the complex I subunit 4 family.

The protein localises to the cellular thylakoid membrane. The enzyme catalyses a plastoquinone + NADH + (n+1) H(+)(in) = a plastoquinol + NAD(+) + n H(+)(out). It carries out the reaction a plastoquinone + NADPH + (n+1) H(+)(in) = a plastoquinol + NADP(+) + n H(+)(out). Its function is as follows. NDH-1 shuttles electrons from NAD(P)H, via FMN and iron-sulfur (Fe-S) centers, to quinones in the respiratory chain. The immediate electron acceptor for the enzyme in this species is believed to be plastoquinone. Couples the redox reaction to proton translocation (for every two electrons transferred, four hydrogen ions are translocated across the cytoplasmic membrane), and thus conserves the redox energy in a proton gradient. In Synechococcus elongatus (strain ATCC 33912 / PCC 7942 / FACHB-805) (Anacystis nidulans R2), this protein is NAD(P)H-quinone oxidoreductase chain 4 2.